Reading from the N-terminus, the 249-residue chain is uncharacterized protein (249 aa).

11–34 (IFGGRSQIGGELARRLAAGATMVL) lines the NADP(+) pocket. Position 142 (Ser142) interacts with substrate. Residue Tyr155 is the Proton acceptor of the active site.

It belongs to the short-chain dehydrogenases/reductases (SDR) family.

This is an uncharacterized protein from Mycobacterium tuberculosis (strain CDC 1551 / Oshkosh).